The sequence spans 349 residues: Protein-glutamate methylesterase/protein-glutamine glutaminase (349 aa).

A Response regulatory domain is found at 5 to 122 (RVLSVDDSAL…REGMLAYSEM (118 aa)). D56 carries the 4-aspartylphosphate modification. Positions 152-344 (LLSSEKLIAI…QQMLATISAG (193 aa)) constitute a CheB-type methylesterase domain. Catalysis depends on residues S164, H190, and D286.

The protein belongs to the CheB family. Phosphorylated by CheA. Phosphorylation of the N-terminal regulatory domain activates the methylesterase activity.

The protein resides in the cytoplasm. The enzyme catalyses [protein]-L-glutamate 5-O-methyl ester + H2O = L-glutamyl-[protein] + methanol + H(+). It carries out the reaction L-glutaminyl-[protein] + H2O = L-glutamyl-[protein] + NH4(+). Involved in chemotaxis. Part of a chemotaxis signal transduction system that modulates chemotaxis in response to various stimuli. Catalyzes the demethylation of specific methylglutamate residues introduced into the chemoreceptors (methyl-accepting chemotaxis proteins or MCP) by CheR. Also mediates the irreversible deamidation of specific glutamine residues to glutamic acid. The protein is Protein-glutamate methylesterase/protein-glutamine glutaminase of Shigella flexneri.